Here is a 398-residue protein sequence, read N- to C-terminus: Acetate kinase (398 aa).

Asparagine 8 provides a ligand contact to Mg(2+). Lysine 15 is a binding site for ATP. Arginine 89 is a binding site for substrate. The active-site Proton donor/acceptor is the aspartate 146. Residues 206–210 (HIGNG), 283–285 (DMR), and 331–335 (GMGEN) contribute to the ATP site. Glutamate 383 lines the Mg(2+) pocket.

The protein belongs to the acetokinase family. In terms of assembly, homodimer. Requires Mg(2+) as cofactor. Mn(2+) is required as a cofactor.

The protein localises to the cytoplasm. The enzyme catalyses acetate + ATP = acetyl phosphate + ADP. Its pathway is metabolic intermediate biosynthesis; acetyl-CoA biosynthesis; acetyl-CoA from acetate: step 1/2. Its function is as follows. Catalyzes the formation of acetyl phosphate from acetate and ATP. Can also catalyze the reverse reaction. This chain is Acetate kinase, found in Streptococcus pyogenes serotype M12 (strain MGAS2096).